The primary structure comprises 101 residues: Urease subunit beta (101 aa).

It belongs to the urease beta subunit family. As to quaternary structure, heterotrimer of UreA (gamma), UreB (beta) and UreC (alpha) subunits. Three heterotrimers associate to form the active enzyme.

It is found in the cytoplasm. It catalyses the reaction urea + 2 H2O + H(+) = hydrogencarbonate + 2 NH4(+). It functions in the pathway nitrogen metabolism; urea degradation; CO(2) and NH(3) from urea (urease route): step 1/1. This chain is Urease subunit beta, found in Nostoc punctiforme (strain ATCC 29133 / PCC 73102).